The sequence spans 196 residues: Carnitine operon protein CaiE (196 aa).

Residues 173-196 (TQPLRQMEENRPRLQGTTDVTPKR) are disordered. Over residues 187 to 196 (QGTTDVTPKR) the composition is skewed to polar residues.

Belongs to the transferase hexapeptide repeat family.

It functions in the pathway amine and polyamine metabolism; carnitine metabolism. In terms of biological role, overproduction of CaiE stimulates the activity of CaiB and CaiD. The chain is Carnitine operon protein CaiE from Escherichia coli O127:H6 (strain E2348/69 / EPEC).